The chain runs to 160 residues: MTNTPSDQPLKQANQRGAARLAAVQALYQMEIGGTGVLEIVAEFEAHRLGQELDGETYLKADASWFRSIVSGVVRDQRKLDPLIGSALQDDWALSRLDSTVRAILRAGTFELLERKDVPVAVIVTEYVEIAKAFFEDEEPKLVNAVLDRIAKQIRGERRK.

Belongs to the NusB family.

In terms of biological role, involved in transcription antitermination. Required for transcription of ribosomal RNA (rRNA) genes. Binds specifically to the boxA antiterminator sequence of the ribosomal RNA (rrn) operons. The protein is Transcription antitermination protein NusB of Sinorhizobium fredii (strain NBRC 101917 / NGR234).